A 382-amino-acid polypeptide reads, in one-letter code: Protein RecA (382 aa).

The segment at 1 to 20 (MPADVKAAQSSAGDSRPGER) is disordered. Residue 79–86 (GPESSGKT) coordinates ATP. The span at 360 to 369 (SAAAKPSAKT) shows a compositional bias: low complexity. A disordered region spans residues 360–382 (SAAAKPSAKTADTDKKLVADGAA). A compositionally biased stretch (basic and acidic residues) spans 370-382 (ADTDKKLVADGAA).

It belongs to the RecA family.

It localises to the cytoplasm. Its function is as follows. Can catalyze the hydrolysis of ATP in the presence of single-stranded DNA, the ATP-dependent uptake of single-stranded DNA by duplex DNA, and the ATP-dependent hybridization of homologous single-stranded DNAs. It interacts with LexA causing its activation and leading to its autocatalytic cleavage. In Synechococcus sp. (strain CC9311), this protein is Protein RecA.